A 619-amino-acid chain; its full sequence is Chaperone protein HscA homolog (619 aa).

It belongs to the heat shock protein 70 family.

In terms of biological role, chaperone involved in the maturation of iron-sulfur cluster-containing proteins. Has a low intrinsic ATPase activity which is markedly stimulated by HscB. The polypeptide is Chaperone protein HscA homolog (Pseudomonas aeruginosa (strain UCBPP-PA14)).